Reading from the N-terminus, the 836-residue chain is Protein AKNAD1 (836 aa).

3 stretches are compositionally biased toward polar residues: residues 159-172, 181-192, and 227-248; these read SWPK…TDQL, SNKPGSATTTEE, and SYQG…NTFK. Disordered regions lie at residues 159-248 and 303-325; these read SWPK…NTFK and LETT…KITE. Positions 311-323 are enriched in basic and acidic residues; sequence CVEKQHQEQKGKI. Residues 372 to 484 adopt a coiled-coil conformation; the sequence is QKISQGKQMC…DVKEKMDESK (113 aa). Disordered stretches follow at residues 510–545 and 575–596; these read SNEI…EAPN and MRLS…DCAE.

Belongs to the AKNA family.

The polypeptide is Protein AKNAD1 (AKNAD1) (Homo sapiens (Human)).